A 467-amino-acid polypeptide reads, in one-letter code: MASVAAARAVPVGSGLRGLQRTLPLVVILGATGTGKSTLALQLGQRLGGEIVSADSMQVYEGLDIITNKVSAQEQRICRHHMISFVDPLVTNYTVVDFRNRATALIEDIFARDKIPIVVGGTNYYIESLLWKVLVNTKPQEMGTEKVIDRKVELEKEDGLVLHKRLSQVDPEMAAKLHPHDKRKVARSLQVFEETGISHSEFLHRQHTEEGGGPLGGPLKFSNPCILWLHADQAVLDERLDKRVDDMLAAGLLEELRDFHRRYNQKNVSENSQDYQHGIFQSIGFKEFHEYLITEGKCTLETSNQLLKKGIEALKQVTKRYARKQNRWVKNRFLSRPGPIVPPVYGLEVSDVSKWEESVLEPALEIVQSFIQGHKPTATPIKMPYNEAENKRSYHLCDLCDRIIIGDREWAAHIKSKSHLNQLKKRRRLDSDAVNTIESQSVSPDHNKEPKEKGSPGQNDQELKCSV.

A mitochondrion-targeting transit peptide spans 1-47; the sequence is MASVAAARAVPVGSGLRGLQRTLPLVVILGATGTGKSTLALQLGQRL. 32–37 is a dimethylallyl diphosphate binding site; sequence TGTGKS. 2 interaction with substrate tRNA regions span residues 55 to 58 and 183 to 187; these read DSMQ and RKVAR. The tract at residues 221-230 is core aggregation region; it reads FSNPCILWLH. The interval 233-255 is interaction with isopentenylpyrophosphate transferase; the sequence is QAVLDERLDKRVDDMLAAGLLEE. Interaction with substrate tRNA regions lie at residues 281-283 and 313-331; these read QSI and ALKQ…WVKN. The segment at 395–425 adopts a Matrin-type zinc-finger fold; it reads HLCDLCDRIIIGDREWAAHIKSKSHLNQLKK. Positions 429–467 are disordered; the sequence is LDSDAVNTIESQSVSPDHNKEPKEKGSPGQNDQELKCSV. Polar residues predominate over residues 433-444; that stretch reads AVNTIESQSVSP. The residue at position 443 (Ser443) is a Phosphoserine. The segment covering 445–454 has biased composition (basic and acidic residues); sequence DHNKEPKEKG. A Phosphoserine modification is found at Ser455.

It belongs to the IPP transferase family.

The protein resides in the mitochondrion. The protein localises to the cytoplasm. It catalyses the reaction adenosine(37) in tRNA + dimethylallyl diphosphate = N(6)-dimethylallyladenosine(37) in tRNA + diphosphate. Its function is as follows. Catalyzes the transfer of a dimethylallyl group onto the adenine at position 37 of both cytosolic and mitochondrial tRNAs, leading to the formation of N6-(dimethylallyl)adenosine (i6A37). Mediates modification of a limited subset of tRNAs: tRNA(Ser)(AGA), tRNA(Ser)(CGA), tRNA(Ser)(UGA), as well as partial modification of the selenocysteine tRNA(Ser)(UCA). TRIT1 is therefore required for selenoprotein expression. The polypeptide is tRNA dimethylallyltransferase (TRIT1) (Homo sapiens (Human)).